Here is a 167-residue protein sequence, read N- to C-terminus: Leptin (167 aa).

The signal sequence occupies residues 1 to 21 (MRCGPLYRFLWLWPYLSYVEA). A disulfide bridge links cysteine 117 with cysteine 167.

This sequence belongs to the leptin family.

The protein localises to the secreted. Its function is as follows. Key player in the regulation of energy balance and body weight control. Once released into the circulation, has central and peripheral effects by binding LEPR, found in many tissues, which results in the activation of several major signaling pathways. In the hypothalamus, acts as an appetite-regulating factor that induces a decrease in food intake and an increase in energy consumption by inducing anorexinogenic factors and suppressing orexigenic neuropeptides, also regulates bone mass and secretion of hypothalamo-pituitary-adrenal hormones. In the periphery, increases basal metabolism, influences reproductive function, regulates pancreatic beta-cell function and insulin secretion, is pro-angiogenic for endothelial cell and affects innate and adaptive immunity. In the arcuate nucleus of the hypothalamus, activates by depolarization POMC neurons inducing FOS and SOCS3 expression to release anorexigenic peptides and inhibits by hyperpolarization NPY neurons inducing SOCS3 with a consequent reduction on release of orexigenic peptides. In addition to its known satiety inducing effect, has a modulatory role in nutrient absorption. In the intestine, reduces glucose absorption by enterocytes by activating PKC and leading to a sequential activation of p38, PI3K and ERK signaling pathways which exerts an inhibitory effect on glucose absorption. Acts as a growth factor on certain tissues, through the activation of different signaling pathways increases expression of genes involved in cell cycle regulation such as CCND1, via JAK2-STAT3 pathway, or VEGFA, via MAPK1/3 and PI3K-AKT1 pathways. May also play an apoptotic role via JAK2-STAT3 pathway and up-regulation of BIRC5 expression. Pro-angiogenic, has mitogenic activity on vascular endothelial cells and plays a role in matrix remodeling by regulating the expression of matrix metalloproteinases (MMPs) and tissue inhibitors of metalloproteinases (TIMPs). In innate immunity, modulates the activity and function of neutrophils by increasing chemotaxis and the secretion of oxygen radicals. Increases phagocytosis by macrophages and enhances secretion of pro-inflammatory mediators. Increases cytotoxic ability of NK cells. Plays a pro-inflammatory role, in synergy with IL1B, by inducing NOS2 which promotes the production of IL6, IL8 and Prostaglandin E2, through a signaling pathway that involves JAK2, PI3K, MAP2K1/MEK1 and MAPK14/p38. In adaptive immunity, promotes the switch of memory T-cells towards T helper-1 cell immune responses. Increases CD4(+)CD25(-) T-cell proliferation and reduces autophagy during TCR (T-cell receptor) stimulation, through MTOR signaling pathway activation and BCL2 up-regulation. The protein is Leptin (LEP) of Capra hircus (Goat).